A 541-amino-acid chain; its full sequence is Putative asparagine synthetase [glutamine-hydrolyzing] 1 (541 aa).

Cysteine 2 acts as the For GATase activity in catalysis. One can recognise a Glutamine amidotransferase type-2 domain in the interval 2 to 213; it reads CSISGIIVKD…PNSQLIYYLD (212 aa). L-glutamine-binding positions include 68–72, 92–94, and aspartate 116; these read RLAIV and NGE. ATP is bound by residues valine 289 and 363–364; that span reads SG.

Belongs to the asparagine synthetase family.

It catalyses the reaction L-aspartate + L-glutamine + ATP + H2O = L-asparagine + L-glutamate + AMP + diphosphate + H(+). Its pathway is amino-acid biosynthesis; L-asparagine biosynthesis; L-asparagine from L-aspartate (L-Gln route): step 1/1. This chain is Putative asparagine synthetase [glutamine-hydrolyzing] 1, found in Methanocaldococcus jannaschii (strain ATCC 43067 / DSM 2661 / JAL-1 / JCM 10045 / NBRC 100440) (Methanococcus jannaschii).